Here is a 647-residue protein sequence, read N- to C-terminus: Glutamyl-tRNA(Gln) amidotransferase subunit B, mitochondrial (647 aa).

A mitochondrion-targeting transit peptide spans 1–16 (MARNLCRNVQTTPRPL). The disordered stretch occupies residues 39–77 (PRPRYFGSSTAKSAKKKSNNKAYSGSSMSAGDASAGPSR). Residues 58 to 76 (NKAYSGSSMSAGDASAGPS) are compositionally biased toward low complexity.

This sequence belongs to the GatB/GatE family. GatB subfamily. In terms of assembly, subunit of the heterotrimeric GatCAB amidotransferase (AdT) complex, composed of A, B and C subunits.

The protein localises to the mitochondrion. It catalyses the reaction L-glutamyl-tRNA(Gln) + L-glutamine + ATP + H2O = L-glutaminyl-tRNA(Gln) + L-glutamate + ADP + phosphate + H(+). In terms of biological role, allows the formation of correctly charged Gln-tRNA(Gln) through the transamidation of misacylated Glu-tRNA(Gln) in the mitochondria. The reaction takes place in the presence of glutamine and ATP through an activated gamma-phospho-Glu-tRNA(Gln). The chain is Glutamyl-tRNA(Gln) amidotransferase subunit B, mitochondrial from Mycosarcoma maydis (Corn smut fungus).